A 435-amino-acid chain; its full sequence is Probable exopolygalacturonase B (435 aa).

A signal peptide spans 1 to 15 (MKFFLATLFASAVSS). N-linked (GlcNAc...) asparagine glycosylation is found at N59, N184, and N224. PbH1 repeat units lie at residues 208-239 (SKDV…DSLN), 240-261 (VDGL…SPKP), 262-283 (NTTN…SMGS), 294-315 (IEHA…RLKA), and 326-347 (INNI…VLDQ). Catalysis depends on D254, which acts as the Proton donor. C256 and C273 form a disulfide bridge. 2 N-linked (GlcNAc...) asparagine glycosylation sites follow: N262 and N274. H277 is an active-site residue. N-linked (GlcNAc...) asparagine glycans are attached at residues N301, N328, N365, and N373. One copy of the PbH1 6 repeat lies at 366 to 388 (VTNILFENISGTSSGKNGKVVAD). Cysteines 391 and 397 form a disulfide. N-linked (GlcNAc...) asparagine glycosylation is present at N406.

It belongs to the glycosyl hydrolase 28 family.

The protein localises to the secreted. The catalysed reaction is [(1-&gt;4)-alpha-D-galacturonosyl](n) + H2O = alpha-D-galacturonate + [(1-&gt;4)-alpha-D-galacturonosyl](n-1). Functionally, specific in hydrolyzing the terminal glycosidic bond of polygalacturonic acid and oligogalacturonates. This Aspergillus flavus (strain ATCC 200026 / FGSC A1120 / IAM 13836 / NRRL 3357 / JCM 12722 / SRRC 167) protein is Probable exopolygalacturonase B (pgxB).